A 124-amino-acid polypeptide reads, in one-letter code: Small ribosomal subunit protein uS12c (124 aa).

Disordered regions lie at residues methionine 1–proline 28 and alanine 104–threonine 124. Basic residues-rich tracts occupy residues glutamate 11–lysine 20 and aspartate 109–threonine 124.

It belongs to the universal ribosomal protein uS12 family. As to quaternary structure, part of the 30S ribosomal subunit.

It is found in the plastid. The protein localises to the chloroplast. Functionally, with S4 and S5 plays an important role in translational accuracy. Located at the interface of the 30S and 50S subunits. The chain is Small ribosomal subunit protein uS12c (rps12) from Gracilaria tenuistipitata var. liui (Red alga).